The following is a 305-amino-acid chain: Tyrosine recombinase XerD (305 aa).

One can recognise a Core-binding (CB) domain in the interval 3 to 88; the sequence is PADASVIERF…TLRAFYGLCL (86 aa). The Tyr recombinase domain maps to 109–299; sequence SLPKALTESQ…ARQHLQKLHA (191 aa). Active-site residues include Arg149, Lys173, His251, Arg254, and His277. Tyr286 functions as the O-(3'-phospho-DNA)-tyrosine intermediate in the catalytic mechanism.

This sequence belongs to the 'phage' integrase family. XerD subfamily. Forms a cyclic heterotetrameric complex composed of two molecules of XerC and two molecules of XerD.

Its subcellular location is the cytoplasm. In terms of biological role, site-specific tyrosine recombinase, which acts by catalyzing the cutting and rejoining of the recombining DNA molecules. The XerC-XerD complex is essential to convert dimers of the bacterial chromosome into monomers to permit their segregation at cell division. It also contributes to the segregational stability of plasmids. The chain is Tyrosine recombinase XerD from Xanthomonas axonopodis pv. citri (strain 306).